The sequence spans 128 residues: SH2 domain-containing protein 1A (128 aa).

Positions 6-102 (VYHGKISRET…GIVIPLQYPV (97 aa)) constitute an SH2 domain. The segment at 67–92 (ETAPGVHKRFFRKIKNLISAFQKPDQ) is interaction with FYN SH3 domain. K89 carries the post-translational modification N6-acetyllysine. Positions 104–128 (KKPSARSTQGATGRRDDPDVFLKTP) are disordered. Residues 116 to 128 (GRRDDPDVFLKTP) are compositionally biased toward basic and acidic residues.

In terms of assembly, interacts with CD84, CD244, LY9, SLAMF1 and FYN. Interacts with NTRK1, NTRK2 and NTRK3.

The protein localises to the cytoplasm. Its function is as follows. Cytoplasmic adapter regulating receptors of the signaling lymphocytic activation molecule (SLAM) family such as SLAMF1, CD244, LY9, CD84, SLAMF6 and SLAMF7. In SLAM signaling seems to cooperate with SH2D1B/EAT-2. Initially it has been proposed that association with SLAMF1 prevents SLAMF1 binding to inhibitory effectors including INPP5D/SHIP1 and PTPN11/SHP-2. However, by simultaneous interactions, recruits FYN which subsequently phosphorylates and activates SLAMF1. Positively regulates CD244/2B4- and CD84-mediated natural killer (NK) cell functions. Can also promote CD48-, SLAMF6 -, LY9-, and SLAMF7-mediated NK cell activation. In the context of NK cell-mediated cytotoxicity enhances conjugate formation with target cells. May also regulate the activity of the neurotrophin receptors NTRK1, NTRK2 and NTRK3. This Bos taurus (Bovine) protein is SH2 domain-containing protein 1A (SH2D1A).